We begin with the raw amino-acid sequence, 502 residues long: Putative diacyglycerol O-acyltransferase Rv1760 (502 aa).

The active-site Proton acceptor is the His174.

Belongs to the long-chain O-acyltransferase family.

It carries out the reaction an acyl-CoA + a 1,2-diacyl-sn-glycerol = a triacyl-sn-glycerol + CoA. The enzyme catalyses di-(9Z)-octadecenoylglycerol + (9Z)-octadecenoyl-CoA = 1,2,3-tri-(9Z-octadecenoyl)-glycerol + CoA. It functions in the pathway glycerolipid metabolism; triacylglycerol biosynthesis. Its function is as follows. Catalyzes the terminal and only committed step in triacylglycerol synthesis by using diacylglycerol and fatty acyl CoA as substrates. Required for storage lipid synthesis. In terms of biological role, upon expression in E.coli functions weakly as a triacylglycerol synthase, making triacylglycerol (TG) from diolein and long-chain fatty acyl-CoA. Has very weak wax synthase activity, incorporating palmityl alcohol into wax esters in the presence of palmitoyl-CoA. This chain is Putative diacyglycerol O-acyltransferase Rv1760, found in Mycobacterium tuberculosis (strain ATCC 25618 / H37Rv).